Reading from the N-terminus, the 66-residue chain is Large ribosomal subunit protein bL35 (66 aa).

This sequence belongs to the bacterial ribosomal protein bL35 family.

In Ruegeria sp. (strain TM1040) (Silicibacter sp.), this protein is Large ribosomal subunit protein bL35.